Here is a 228-residue protein sequence, read N- to C-terminus: UPF0173 metal-dependent hydrolase LMOf2365_1599 (228 aa).

It belongs to the UPF0173 family.

This chain is UPF0173 metal-dependent hydrolase LMOf2365_1599, found in Listeria monocytogenes serotype 4b (strain F2365).